A 464-amino-acid polypeptide reads, in one-letter code: Bifunctional protein GlmU (464 aa).

The tract at residues 1–236 is pyrophosphorylase; the sequence is MRAVILAAGL…PTEALGVNTR (236 aa). Residues 6–9, Lys-20, and 77–78 contribute to the UDP-N-acetyl-alpha-D-glucosamine site; these read LAAG and GT. Asp-102 contacts Mg(2+). UDP-N-acetyl-alpha-D-glucosamine contacts are provided by Gly-145, Glu-161, Asn-176, and Asn-234. Residue Asn-234 participates in Mg(2+) binding. A linker region spans residues 237-257; it reads WDLALVENVIKLKIARYWAER. Residues 258 to 464 form an N-acetyltransferase region; it reads GVTVHYPETV…GRGKKKLQKD (207 aa). Positions 340 and 358 each coordinate UDP-N-acetyl-alpha-D-glucosamine. His-370 functions as the Proton acceptor in the catalytic mechanism. UDP-N-acetyl-alpha-D-glucosamine-binding residues include Tyr-373 and Asn-384. Residues Ala-387, 393-394, Ser-412, Gly-430, and Arg-447 each bind acetyl-CoA; that span reads NY.

It in the N-terminal section; belongs to the N-acetylglucosamine-1-phosphate uridyltransferase family. In the C-terminal section; belongs to the transferase hexapeptide repeat family. Homotrimer. The cofactor is Mg(2+).

The protein localises to the cytoplasm. It carries out the reaction alpha-D-glucosamine 1-phosphate + acetyl-CoA = N-acetyl-alpha-D-glucosamine 1-phosphate + CoA + H(+). The enzyme catalyses N-acetyl-alpha-D-glucosamine 1-phosphate + UTP + H(+) = UDP-N-acetyl-alpha-D-glucosamine + diphosphate. It participates in nucleotide-sugar biosynthesis; UDP-N-acetyl-alpha-D-glucosamine biosynthesis; N-acetyl-alpha-D-glucosamine 1-phosphate from alpha-D-glucosamine 6-phosphate (route II): step 2/2. Its pathway is nucleotide-sugar biosynthesis; UDP-N-acetyl-alpha-D-glucosamine biosynthesis; UDP-N-acetyl-alpha-D-glucosamine from N-acetyl-alpha-D-glucosamine 1-phosphate: step 1/1. The protein operates within bacterial outer membrane biogenesis; LPS lipid A biosynthesis. Its function is as follows. Catalyzes the last two sequential reactions in the de novo biosynthetic pathway for UDP-N-acetylglucosamine (UDP-GlcNAc). The C-terminal domain catalyzes the transfer of acetyl group from acetyl coenzyme A to glucosamine-1-phosphate (GlcN-1-P) to produce N-acetylglucosamine-1-phosphate (GlcNAc-1-P), which is converted into UDP-GlcNAc by the transfer of uridine 5-monophosphate (from uridine 5-triphosphate), a reaction catalyzed by the N-terminal domain. The sequence is that of Bifunctional protein GlmU from Aquifex aeolicus (strain VF5).